Here is a 244-residue protein sequence, read N- to C-terminus: MSNLLLGVNIDHIATLRNARNTTYPDPIYAAFIAEQSGADSITIHLREDRRHITDRDVEMLCKTIQTSMNLEIAATDEMINIACTLKPHCCCLVPERRQELTTEGGLDIINKANKLQDIIFKLTEAGIRVSLFIDPNEQQISVAYNIGAPYIELHTGMYSHATDATTQNLEYKRIKKSVQYAVNKGLKVNAGHGLNYYNVRPIAMLPGIQELNIGHAIISRSIFCGLPKAIQDMKKLIQDSRRG.

Asn-9 contributes to the 3-amino-2-oxopropyl phosphate binding site. Residue 11-12 (DH) coordinates 1-deoxy-D-xylulose 5-phosphate. Arg-20 is a binding site for 3-amino-2-oxopropyl phosphate. His-45 (proton acceptor) is an active-site residue. 1-deoxy-D-xylulose 5-phosphate-binding residues include Arg-47 and His-52. The Proton acceptor role is filled by Glu-72. Thr-102 is a 1-deoxy-D-xylulose 5-phosphate binding site. His-193 serves as the catalytic Proton donor. 3-amino-2-oxopropyl phosphate is bound by residues Gly-194 and 215–216 (GH).

It belongs to the PNP synthase family. In terms of assembly, homooctamer; tetramer of dimers.

The protein resides in the cytoplasm. The catalysed reaction is 3-amino-2-oxopropyl phosphate + 1-deoxy-D-xylulose 5-phosphate = pyridoxine 5'-phosphate + phosphate + 2 H2O + H(+). It participates in cofactor biosynthesis; pyridoxine 5'-phosphate biosynthesis; pyridoxine 5'-phosphate from D-erythrose 4-phosphate: step 5/5. Catalyzes the complicated ring closure reaction between the two acyclic compounds 1-deoxy-D-xylulose-5-phosphate (DXP) and 3-amino-2-oxopropyl phosphate (1-amino-acetone-3-phosphate or AAP) to form pyridoxine 5'-phosphate (PNP) and inorganic phosphate. This Blochmanniella pennsylvanica (strain BPEN) protein is Pyridoxine 5'-phosphate synthase.